The following is a 551-amino-acid chain: MSETFAELFEKSLTETDLRPGALVKATVVEVRPDRVIVNAGLKSEGIIPASEFRNEEPHVGDEFFVVIEASDNGFGETRLSREKARRAKAWSELEKAYKAGEMVKGVIIERVKGGFTVDLNSVRAFLPGSLVDVKPVRDPGYLEDKEIDFKIIKMDQRRNNVVVSRRAVMEAETSAERQARLEELQEGQEIKGVIKNITDYGAFVDLGGVDGLLHITDMAWGRVKHPSDLLNVGDEVHVKVLKFDRDKKRVSLGMKQLADDPWAKIERRYPVNSRVFGKVTNITDYGCFVKLEEGVEGLVHTSELDWTNKNIHPSKVVQSGEEVEVMVLEIDEERRRISLGIKQCKRNPWQEFAEKHEKDEKITGKVRSITDFGMFIGLEGDIDGLVHLSDISWTESGEEAIRNYKKGDEVQAVILGIDPERERISLGIKQLEGDPFMEFVESYDKDAVIQAKVKEVESKQAVLELADQVLGQMRLADYTYDRVKDLTQELNVGDEVAVKIVNVDRKNRLINVSHKAVEGRSEKGTRTVSDVPTKTTLGDLLKEKIQSKDE.

S1 motif domains follow at residues 21–83 (GALV…LSRE), 101–167 (GEMV…VSRR), 188–256 (GQEI…LGMK), 273–343 (NSRV…LGIK), 360–430 (DEKI…LGIK), and 447–516 (DAVI…VSHK).

Belongs to the bacterial ribosomal protein bS1 family.

Its function is as follows. Binds mRNA; thus facilitating recognition of the initiation point. It is needed to translate mRNA with a short Shine-Dalgarno (SD) purine-rich sequence. This Coxiella burnetii (strain RSA 493 / Nine Mile phase I) protein is Small ribosomal subunit protein bS1 (rpsA).